Here is a 315-residue protein sequence, read N- to C-terminus: Carbamate kinase (315 aa).

The protein belongs to the carbamate kinase family. In terms of assembly, homodimer.

It is found in the cytoplasm. The catalysed reaction is hydrogencarbonate + NH4(+) + ATP = carbamoyl phosphate + ADP + H2O + H(+). The sequence is that of Carbamate kinase (cpkA) from Thermococcus kodakarensis (strain ATCC BAA-918 / JCM 12380 / KOD1) (Pyrococcus kodakaraensis (strain KOD1)).